The sequence spans 276 residues: Rhomboid-type serine protease 2 (276 aa).

5 helical membrane-spanning segments follow: residues Leu27–Val47, Phe77–Leu97, Thr109–Val129, Phe132–Gly152, and Trp175–Leu195. Residue Ser144 is the Nucleophile of the active site. The active site involves His197. Residues Leu198–Pro218 traverse the membrane as a helical segment.

The protein belongs to the peptidase S54 family.

The protein resides in the golgi apparatus membrane. It is found in the golgi apparatus. It localises to the cis-Golgi network membrane. It carries out the reaction Cleaves type-1 transmembrane domains using a catalytic dyad composed of serine and histidine that are contributed by different transmembrane domains.. In terms of biological role, probable rhomboid-type serine protease that catalyzes intramembrane proteolysis. The polypeptide is Rhomboid-type serine protease 2 (rbd-2) (Neurospora crassa (strain ATCC 24698 / 74-OR23-1A / CBS 708.71 / DSM 1257 / FGSC 987)).